A 291-amino-acid chain; its full sequence is Shikimate dehydrogenase (NADP(+)) (291 aa).

Residues 23–25 and Thr-70 each bind shikimate; that span reads SFS. The active-site Proton acceptor is the Lys-74. Shikimate-binding residues include Asn-95 and Asp-110. Residues 135-139 and Leu-232 contribute to the NADP(+) site; that span reads GAGGA. Residue Tyr-234 coordinates shikimate. Gly-255 is a binding site for NADP(+).

The protein belongs to the shikimate dehydrogenase family. In terms of assembly, homodimer.

It catalyses the reaction shikimate + NADP(+) = 3-dehydroshikimate + NADPH + H(+). Its pathway is metabolic intermediate biosynthesis; chorismate biosynthesis; chorismate from D-erythrose 4-phosphate and phosphoenolpyruvate: step 4/7. In terms of biological role, involved in the biosynthesis of the chorismate, which leads to the biosynthesis of aromatic amino acids. Catalyzes the reversible NADPH linked reduction of 3-dehydroshikimate (DHSA) to yield shikimate (SA). In Desulforamulus reducens (strain ATCC BAA-1160 / DSM 100696 / MI-1) (Desulfotomaculum reducens), this protein is Shikimate dehydrogenase (NADP(+)).